The sequence spans 345 residues: Glycerol-3-phosphate dehydrogenase [NAD(P)+] (345 aa).

NADPH is bound by residues Ser-23, Tyr-24, His-44, and Lys-118. Residues Lys-118, Gly-147, and Thr-149 each contribute to the sn-glycerol 3-phosphate site. Ala-151 provides a ligand contact to NADPH. Residues Lys-203, Asp-256, Ser-266, Arg-267, and Asn-268 each contribute to the sn-glycerol 3-phosphate site. Lys-203 functions as the Proton acceptor in the catalytic mechanism. An NADPH-binding site is contributed by Arg-267. Residues Val-291 and Glu-293 each coordinate NADPH.

The protein belongs to the NAD-dependent glycerol-3-phosphate dehydrogenase family.

The protein resides in the cytoplasm. It carries out the reaction sn-glycerol 3-phosphate + NAD(+) = dihydroxyacetone phosphate + NADH + H(+). It catalyses the reaction sn-glycerol 3-phosphate + NADP(+) = dihydroxyacetone phosphate + NADPH + H(+). The protein operates within membrane lipid metabolism; glycerophospholipid metabolism. Catalyzes the reduction of the glycolytic intermediate dihydroxyacetone phosphate (DHAP) to sn-glycerol 3-phosphate (G3P), the key precursor for phospholipid synthesis. This is Glycerol-3-phosphate dehydrogenase [NAD(P)+] from Vibrio vulnificus (strain CMCP6).